A 215-amino-acid polypeptide reads, in one-letter code: Adenylate kinase (215 aa).

Position 10-15 (glycine 10–threonine 15) interacts with ATP. The tract at residues serine 30–valine 59 is NMP. Residues threonine 31, arginine 36, glutamate 57–valine 59, glycine 85–arginine 88, and glutamine 92 each bind AMP. The LID stretch occupies residues glycine 126–aspartate 162. An ATP-binding site is contributed by arginine 127. The Zn(2+) site is built by cysteine 130 and cysteine 132. ATP is bound at residue serine 135–tyrosine 136. Zn(2+)-binding residues include cysteine 149 and cysteine 152. Positions 159 and 170 each coordinate AMP. An ATP-binding site is contributed by lysine 198.

The protein belongs to the adenylate kinase family. Monomer.

It is found in the cytoplasm. The catalysed reaction is AMP + ATP = 2 ADP. It participates in purine metabolism; AMP biosynthesis via salvage pathway; AMP from ADP: step 1/1. Functionally, catalyzes the reversible transfer of the terminal phosphate group between ATP and AMP. Plays an important role in cellular energy homeostasis and in adenine nucleotide metabolism. The protein is Adenylate kinase of Methanosarcina acetivorans (strain ATCC 35395 / DSM 2834 / JCM 12185 / C2A).